Here is a 95-residue protein sequence, read N- to C-terminus: Large ribosomal subunit protein uL23 (95 aa).

This sequence belongs to the universal ribosomal protein uL23 family. As to quaternary structure, part of the 50S ribosomal subunit. Contacts protein L29, and trigger factor when it is bound to the ribosome.

Functionally, one of the early assembly proteins it binds 23S rRNA. One of the proteins that surrounds the polypeptide exit tunnel on the outside of the ribosome. Forms the main docking site for trigger factor binding to the ribosome. The sequence is that of Large ribosomal subunit protein uL23 from Thermodesulfovibrio yellowstonii (strain ATCC 51303 / DSM 11347 / YP87).